The sequence spans 540 residues: NEDD8-activating enzyme E1 regulatory subunit AXR1 (540 aa).

It belongs to the ubiquitin-activating E1 family. ULA1 subfamily. Heterodimer of ECR1 and AXR1. The complex binds to RUB1/NEDD8 and RCE1. As to expression, expressed in shoot, root and floral meristems, in vascular tissues of cotyledons and mature leaves, and in the stele of the root. Expressed at higher levels on the lower side of an emerging root during germination and at higher levels on the underside of the apical hook.

It localises to the nucleus. It participates in protein modification; protein neddylation. Regulatory subunit of the dimeric ECR1-AXR1 E1 enzyme. E1 activates RUB1/NEDD8 by first adenylating its C-terminal glycine residue with ATP, thereafter linking this residue to the side chain of the catalytic cysteine, yielding a RUB1-ECR1 thioester and free AMP. E1 finally transfers RUB1 to the catalytic cysteine of RCE1. Plays an important role in auxin response. Regulates the chromosomal localization of meiotic recombination by crossovers (COs) and subsequent synapsis, probably through the activation of a CRL4 complex. Required for E3-mediated protein degradation in response to auxin, jasmonic acid and cold stress. Required for the COP1-COP10-CSN-mediated repression of photomorphogenesis in the dark. May function redundantly with AXL1 in the RUB conjugating pathway. Seems not to be functionally equivalent to AXL1 in vivo. The chain is NEDD8-activating enzyme E1 regulatory subunit AXR1 from Arabidopsis thaliana (Mouse-ear cress).